A 157-amino-acid polypeptide reads, in one-letter code: Protein SINE4 (157 aa).

One can recognise a KASH domain in the interval 104–157 (VTSSSDTTKAKKKTTIRRFVSVTMVLLLSWVLVVLMNHFDHLSMNTQIITLVPT). The chain crosses the membrane as a helical span at residues 122–142 (FVSVTMVLLLSWVLVVLMNHF). Positions 154-157 (LVPT) match the Required for nuclear localization motif.

In terms of assembly, interacts with SUN1 and SUN2.

The protein resides in the nucleus membrane. The chain is Protein SINE4 from Arabidopsis thaliana (Mouse-ear cress).